Consider the following 159-residue polypeptide: Small ribosomal subunit protein bS16 (159 aa).

The segment covering 102 to 119 (GIPEAAEEAPATESVAEA) has biased composition (low complexity). The disordered stretch occupies residues 102–159 (GIPEAAEEAPATESVAEAEVADVPESELSEAATETAAAELSPPEAEVEKPQVEEAVEA). Residues 120–129 (EVADVPESEL) are compositionally biased toward acidic residues. The segment covering 130–145 (SEAATETAAAELSPPE) has biased composition (low complexity).

Belongs to the bacterial ribosomal protein bS16 family.

The chain is Small ribosomal subunit protein bS16 from Synechococcus sp. (strain JA-2-3B'a(2-13)) (Cyanobacteria bacterium Yellowstone B-Prime).